Reading from the N-terminus, the 414-residue chain is Serine hydroxymethyltransferase (414 aa).

Residues L121 and 125–127 (GHL) each bind (6S)-5,6,7,8-tetrahydrofolate. Position 229 is an N6-(pyridoxal phosphate)lysine (K229).

Belongs to the SHMT family. Homodimer. The cofactor is pyridoxal 5'-phosphate.

The protein localises to the cytoplasm. It carries out the reaction (6R)-5,10-methylene-5,6,7,8-tetrahydrofolate + glycine + H2O = (6S)-5,6,7,8-tetrahydrofolate + L-serine. It functions in the pathway one-carbon metabolism; tetrahydrofolate interconversion. Its pathway is amino-acid biosynthesis; glycine biosynthesis; glycine from L-serine: step 1/1. Its function is as follows. Catalyzes the reversible interconversion of serine and glycine with tetrahydrofolate (THF) serving as the one-carbon carrier. This reaction serves as the major source of one-carbon groups required for the biosynthesis of purines, thymidylate, methionine, and other important biomolecules. Also exhibits THF-independent aldolase activity toward beta-hydroxyamino acids, producing glycine and aldehydes, via a retro-aldol mechanism. This Polynucleobacter asymbioticus (strain DSM 18221 / CIP 109841 / QLW-P1DMWA-1) (Polynucleobacter necessarius subsp. asymbioticus) protein is Serine hydroxymethyltransferase.